The chain runs to 416 residues: Phosphoglycerate kinase (416 aa).

Substrate-binding positions include 24–26 (DLN), Arg-40, 63–66 (HLGR), Arg-126, and Arg-166. Residues Lys-216, Gly-304, Glu-335, and 364-367 (GGDS) contribute to the ATP site.

Belongs to the phosphoglycerate kinase family. Monomer.

The protein localises to the cytoplasm. The catalysed reaction is (2R)-3-phosphoglycerate + ATP = (2R)-3-phospho-glyceroyl phosphate + ADP. It participates in carbohydrate degradation; glycolysis; pyruvate from D-glyceraldehyde 3-phosphate: step 2/5. In Mycobacterium leprae (strain Br4923), this protein is Phosphoglycerate kinase.